The sequence spans 1439 residues: Microtubule organization protein AKNA (1439 aa).

2 stretches are compositionally biased toward basic and acidic residues: residues methionine 1–tryptophan 10 and alanine 25–arginine 35. Residues methionine 1–proline 394 are disordered. Serine 52 carries the phosphoserine modification. The segment covering tryptophan 71–serine 83 has biased composition (basic and acidic residues). Residues serine 89–aspartate 99 show a composition bias toward acidic residues. Over residues glutamine 263–histidine 275 the composition is skewed to polar residues. Positions alanine 276 to threonine 285 are enriched in basic and acidic residues. Phosphoserine is present on residues serine 316, serine 499, and serine 534. 2 disordered regions span residues serine 507–glutamine 562 and isoleucine 659–proline 682. Low complexity predominate over residues leucine 533–leucine 544. 2 positions are modified to phosphoserine: serine 767 and serine 770. Positions leucine 771–threonine 804 are PEST. Disordered stretches follow at residues methionine 775 to glutamate 942 and isoleucine 977 to arginine 1005. Acidic residues predominate over residues glutamate 778 to glycine 792. Position 848 is a phosphoserine (serine 848). Residues proline 865–proline 875 are compositionally biased toward pro residues. Polar residues-rich tracts occupy residues serine 879–glutamate 891, serine 929–threonine 940, and glutamate 983–serine 999. Serine 886 is subject to Phosphoserine. The tract at residues histidine 911–serine 932 is PEST. Serine 997 and serine 1010 each carry phosphoserine. Positions leucine 1095–glutamate 1165 are disordered. A DNA-binding region (a.T hook) is located at residues arginine 1115 to serine 1123. Positions serine 1135–glutamate 1147 are enriched in basic and acidic residues. Serine 1172 and serine 1173 each carry phosphoserine. A disordered region spans residues leucine 1180 to aspartate 1211. Position 1228 is a phosphoserine (serine 1228). Positions alanine 1252–alanine 1329 are disordered. The span at serine 1303–serine 1317 shows a compositional bias: polar residues. 3 positions are modified to phosphoserine: serine 1377, serine 1387, and serine 1424.

The protein belongs to the AKNA family. In terms of assembly, interacts with DCTN1. Interacts with MAPRE1/EB1. Interacts with ODF2. Interacts with CAMSAP3. Post-translationally, phosphorylated; phosphorylation regulates dissociation from and reassembly at the centrosome. As to expression, predominantly expressed by lymphoid tissues. Highly expressed in the spleen, lymph nodes and peripheral blood leukocytes, expressed at lower level in the thymus. Mainly expressed by germinal center B-lymphocytes, a stage in which receptor and ligand interactions are crucial for B-lymphocyte maturation. Expressed by B- and T-lymphocytes, Natural killer cells and CD1a(+)CD14(-) but not CD1a(-)CD14(+) dendritic cells. Weakly or not expressed in fetal liver and in adult bone marrow.

The protein localises to the cytoplasm. It is found in the cytoskeleton. The protein resides in the microtubule organizing center. Its subcellular location is the centrosome. It localises to the centriole. The protein localises to the nucleus. In terms of biological role, centrosomal protein that plays a key role in cell delamination by regulating microtubule organization. Required for the delamination and retention of neural stem cells from the subventricular zone during neurogenesis. Also regulates the epithelial-to-mesenchymal transition in other epithelial cells. Acts by increasing centrosomal microtubule nucleation and recruiting nucleation factors and minus-end stabilizers, thereby destabilizing microtubules at the adherens junctions and mediating constriction of the apical endfoot. In addition, may also act as a transcription factor that specifically activates the expression of the CD40 receptor and its ligand CD40L/CD154, two cell surface molecules on lymphocytes that are critical for antigen-dependent-B-cell development. Binds to A/T-rich promoters. It is unclear how it can both act as a microtubule organizer and as a transcription factor; additional evidences are required to reconcile these two apparently contradictory functions. The chain is Microtubule organization protein AKNA from Homo sapiens (Human).